The primary structure comprises 226 residues: Ribonuclease 3 (226 aa).

In terms of domain architecture, RNase III spans threonine 5–glycine 127. Residue glutamate 40 participates in Mg(2+) binding. Aspartate 44 is a catalytic residue. Mg(2+) contacts are provided by aspartate 113 and glutamate 116. Glutamate 116 is an active-site residue. The region spanning aspartate 154–serine 224 is the DRBM domain.

This sequence belongs to the ribonuclease III family. In terms of assembly, homodimer. Mg(2+) serves as cofactor.

The protein resides in the cytoplasm. It carries out the reaction Endonucleolytic cleavage to 5'-phosphomonoester.. Digests double-stranded RNA. Involved in the processing of primary rRNA transcript to yield the immediate precursors to the large and small rRNAs (23S and 16S). Processes some mRNAs, and tRNAs when they are encoded in the rRNA operon. Processes pre-crRNA and tracrRNA of type II CRISPR loci if present in the organism. The protein is Ribonuclease 3 of Xanthomonas axonopodis pv. citri (strain 306).